The chain runs to 326 residues: tRNA-cytidine(32) 2-sulfurtransferase (326 aa).

The short motif at 63–68 is the PP-loop motif element; that stretch reads SGGKDS. Positions 138, 141, and 229 each coordinate [4Fe-4S] cluster.

This sequence belongs to the TtcA family. As to quaternary structure, homodimer. Mg(2+) is required as a cofactor. Requires [4Fe-4S] cluster as cofactor.

The protein resides in the cytoplasm. The catalysed reaction is cytidine(32) in tRNA + S-sulfanyl-L-cysteinyl-[cysteine desulfurase] + AH2 + ATP = 2-thiocytidine(32) in tRNA + L-cysteinyl-[cysteine desulfurase] + A + AMP + diphosphate + H(+). It participates in tRNA modification. In terms of biological role, catalyzes the ATP-dependent 2-thiolation of cytidine in position 32 of tRNA, to form 2-thiocytidine (s(2)C32). The sulfur atoms are provided by the cysteine/cysteine desulfurase (IscS) system. This is tRNA-cytidine(32) 2-sulfurtransferase from Leptothrix cholodnii (strain ATCC 51168 / LMG 8142 / SP-6) (Leptothrix discophora (strain SP-6)).